A 193-amino-acid polypeptide reads, in one-letter code: Acyl carrier protein phosphodiesterase (193 aa).

It belongs to the AcpH family.

It catalyses the reaction holo-[ACP] + H2O = apo-[ACP] + (R)-4'-phosphopantetheine + H(+). In terms of biological role, converts holo-ACP to apo-ACP by hydrolytic cleavage of the phosphopantetheine prosthetic group from ACP. In Escherichia coli O157:H7, this protein is Acyl carrier protein phosphodiesterase.